The sequence spans 110 residues: BET1-like protein (110 aa).

The Cytoplasmic portion of the chain corresponds to 1–85; sequence MADPWNRGHG…MVRSGRDNRK (85 aa). Residues 14–76 enclose the t-SNARE coiled-coil homology domain; sequence DMLDAENKRM…TGSVKRFSTM (63 aa). The chain crosses the membrane as a helical; Anchor for type IV membrane protein span at residues 86–106; the sequence is ILCYVSVGLVVAFFLLYYLVS. Residues 107-110 are Lumenal-facing; the sequence is RMQN.

In terms of assembly, component of a SNARE complex consisting of stx5, ykt6, gosr2 and bet1l.

It is found in the golgi apparatus membrane. Its function is as follows. Vesicle SNARE required for targeting and fusion of retrograde transport vesicles with the Golgi complex. Required for the integrity of the Golgi complex. The chain is BET1-like protein (bet1l) from Danio rerio (Zebrafish).